The primary structure comprises 128 residues: Azurin (128 aa).

The region spanning 1–128 (AECKVTVDST…SMMKGTVTVK (128 aa)) is the Plastocyanin-like domain. Cys3 and Cys26 are oxidised to a cystine. 4 residues coordinate Cu cation: His46, Cys112, His117, and Met121.

The protein localises to the periplasm. Functionally, transfers electrons from cytochrome c551 to cytochrome oxidase. This is Azurin from Pseudomonas fluorescens biotype A.